A 655-amino-acid chain; its full sequence is p-hydroxybenzoic acid efflux pump subunit AaeB (655 aa).

11 consecutive transmembrane segments (helical) span residues 13–33 (FAVKLATAIVLALFVGFHFQL), 38–58 (WAVLTAAIVAAGPAFAAGGEP), 69–89 (LRIIGTFIGCIAGLVIIIAMI), 93–113 (LLMILVCCIWAGFCTWISSLV), 121–141 (WGLAGYTALIIVITIQPEPLL), 152–172 (EIVIGIVCAIMADLLFSPRSI), 370–390 (LFWLWTGWTSGSGAMVMIAVV), 407–427 (FIYGTLAALPLGLLYFLVIIP), 431–451 (QSMLLLCISLAVLGFFLGIEV), 459–479 (MGALASTINIIVLDNPMTFHF), and 482–502 (FLDSALGQIVGCVLAFTVILL).

It belongs to the aromatic acid exporter ArAE (TC 2.A.85) family.

It localises to the cell inner membrane. In terms of biological role, forms an efflux pump with AaeA. Could function as a metabolic relief valve, allowing to eliminate certain compounds when they accumulate to high levels in the cell. The sequence is that of p-hydroxybenzoic acid efflux pump subunit AaeB from Escherichia coli (strain K12 / MC4100 / BW2952).